Reading from the N-terminus, the 410-residue chain is Lissencephaly-1 homolog (410 aa).

One can recognise a LisH domain in the interval 7-39 (QRDELNRAIADYLRSNGYEEAYSVFKKEAELDM). Residues 56 to 82 (TSVIRLQKKVMELESKLNEAKEEFTSG) adopt a coiled-coil conformation. WD repeat units follow at residues 106-147 (GHRS…RTLK), 148-187 (GHTD…CIRT), 190-229 (GHDH…CVKT), 232-271 (GHRE…CKAE), 274-333 (EHEH…CLMT), 336-377 (GHDN…KTLN), and 379-410 (HEHF…WECR).

This sequence belongs to the WD repeat LIS1/nudF family. Can self-associate. Component of the cytosolic PAF-AH (I) heterotetrameric enzyme, which is composed of PAFAH1B1 (beta), PAFAH1B2 (alpha2) and PAFAH1B3 (alpha1) subunits. The catalytic activity of the enzyme resides in the alpha1 (PAFAH1B3) and alpha2 (PAFAH1B2) subunits, whereas the beta subunit (PAFAH1B1) has regulatory activity. Trimer formation is not essential for the catalytic activity. Interacts with dynein, dynactin, nde1 and ndel1.

Its subcellular location is the cytoplasm. The protein localises to the cytoskeleton. It is found in the microtubule organizing center. The protein resides in the centrosome. Its function is as follows. Regulatory subunit (beta subunit) of the cytosolic type I platelet-activating factor (PAF) acetylhydrolase (PAF-AH (I)), an enzyme that catalyzes the hydrolyze of the acetyl group at the sn-2 position of PAF and its analogs and participates in the PAF inactivation. Positively regulates the activity of the minus-end directed microtubule motor protein dynein. May enhance dynein-mediated microtubule sliding by targeting dynein to the microtubule plus end. Required for several dynein- and microtubule-dependent processes such as the maintenance of Golgi integrity, the peripheral transport of microtubule fragments and the coupling of the nucleus and centrosome. May be required for proliferation of neuronal precursors and neuronal migration. In Xenopus tropicalis (Western clawed frog), this protein is Lissencephaly-1 homolog (pafah1b1).